A 344-amino-acid chain; its full sequence is Holliday junction branch migration complex subunit RuvB (344 aa).

Positions 1 to 182 (MRIEALNTAP…FGINSRLDYY (182 aa)) are large ATPase domain (RuvB-L). Residues Ile21, Arg22, Gly63, Lys66, Thr67, Thr68, 129–131 (EDY), Arg172, Tyr182, and Arg219 contribute to the ATP site. Thr67 provides a ligand contact to Mg(2+). The tract at residues 183-253 (NPELLQSIII…VARRTLESLE (71 aa)) is small ATPAse domain (RuvB-S). The head domain (RuvB-H) stretch occupies residues 256 to 344 (EGGLDDMDKK…GSLFDTAEDG (89 aa)). Arg311 and Arg316 together coordinate DNA.

The protein belongs to the RuvB family. As to quaternary structure, homohexamer. Forms an RuvA(8)-RuvB(12)-Holliday junction (HJ) complex. HJ DNA is sandwiched between 2 RuvA tetramers; dsDNA enters through RuvA and exits via RuvB. An RuvB hexamer assembles on each DNA strand where it exits the tetramer. Each RuvB hexamer is contacted by two RuvA subunits (via domain III) on 2 adjacent RuvB subunits; this complex drives branch migration. In the full resolvosome a probable DNA-RuvA(4)-RuvB(12)-RuvC(2) complex forms which resolves the HJ.

The protein localises to the cytoplasm. The catalysed reaction is ATP + H2O = ADP + phosphate + H(+). Its function is as follows. The RuvA-RuvB-RuvC complex processes Holliday junction (HJ) DNA during genetic recombination and DNA repair, while the RuvA-RuvB complex plays an important role in the rescue of blocked DNA replication forks via replication fork reversal (RFR). RuvA specifically binds to HJ cruciform DNA, conferring on it an open structure. The RuvB hexamer acts as an ATP-dependent pump, pulling dsDNA into and through the RuvAB complex. RuvB forms 2 homohexamers on either side of HJ DNA bound by 1 or 2 RuvA tetramers; 4 subunits per hexamer contact DNA at a time. Coordinated motions by a converter formed by DNA-disengaged RuvB subunits stimulates ATP hydrolysis and nucleotide exchange. Immobilization of the converter enables RuvB to convert the ATP-contained energy into a lever motion, pulling 2 nucleotides of DNA out of the RuvA tetramer per ATP hydrolyzed, thus driving DNA branch migration. The RuvB motors rotate together with the DNA substrate, which together with the progressing nucleotide cycle form the mechanistic basis for DNA recombination by continuous HJ branch migration. Branch migration allows RuvC to scan DNA until it finds its consensus sequence, where it cleaves and resolves cruciform DNA. The chain is Holliday junction branch migration complex subunit RuvB from Chlorobaculum tepidum (strain ATCC 49652 / DSM 12025 / NBRC 103806 / TLS) (Chlorobium tepidum).